Consider the following 1939-residue polypeptide: Myosin-4 (1939 aa).

Residues 33-82 (DAKSSVFVVDAKESYVKATVQSREGGKVTAKTEGGATVTVKEDQVFSMNP) enclose the Myosin N-terminal SH3-like domain. A Phosphoserine modification is found at Ser-36. Thr-64 and Thr-69 each carry phosphothreonine. Ser-79 carries the post-translational modification Phosphoserine. Residues 86-782 (DKIEDMAMMT…LLGTLEEMRD (697 aa)) form the Myosin motor domain. Lys-130 is subject to N6,N6,N6-trimethyllysine. Residue 179–186 (GESGAGKT) coordinates ATP. Tyr-389 carries the phosphotyrosine modification. Residue Thr-391 is modified to Phosphothreonine. Position 392 is a phosphoserine (Ser-392). Thr-419 carries the phosphothreonine modification. Phosphotyrosine is present on Tyr-424. Phosphoserine is present on Ser-625. The actin-binding stretch occupies residues 659–681 (LNKLMTNLKSTHPHFVRCLIPNE). The residue at position 757 (His-757) is a Pros-methylhistidine. The tract at residues 761-775 (KFGHTKVFFKAGLLG) is actin-binding. Residue Thr-776 is modified to Phosphothreonine. An IQ domain is found at 785 to 814 (LAQLITRTQAVCRGYLMRVEFRKMMERRES). A coiled-coil region spans residues 843-1939 (LLKSAETEKE…EVHTKVISEE (1097 aa)). Phosphoserine occurs at positions 1092 and 1096. 2 disordered regions span residues 1128 to 1147 (AERA…SREL) and 1153 to 1172 (RLEE…KKRE). A phosphoserine mark is found at Ser-1162 and Ser-1237. Residue Thr-1241 is modified to Phosphothreonine. Ser-1243 is subject to Phosphoserine. Thr-1255 carries the phosphothreonine modification. Ser-1261 carries the phosphoserine modification. Position 1265 is a phosphothreonine (Thr-1265). Ser-1278 carries the phosphoserine modification. The residue at position 1286 (Thr-1286) is a Phosphothreonine. A phosphoserine mark is found at Ser-1288, Ser-1292, Ser-1303, Ser-1306, and Ser-1413. Tyr-1464 carries the phosphotyrosine modification. Residue Thr-1467 is modified to Phosphothreonine. Ser-1474 carries the post-translational modification Phosphoserine. Residue Tyr-1492 is modified to Phosphotyrosine. Ser-1495 carries the post-translational modification Phosphoserine. Thr-1501 is modified (phosphothreonine). At Ser-1514 the chain carries Phosphoserine. Thr-1517 bears the Phosphothreonine mark. Ser-1542, Ser-1547, Ser-1554, Ser-1574, Ser-1600, Ser-1603, Ser-1714, and Ser-1726 each carry phosphoserine. Thr-1730 and Thr-1736 each carry phosphothreonine. Ser-1739 bears the Phosphoserine mark.

It belongs to the TRAFAC class myosin-kinesin ATPase superfamily. Myosin family. As to quaternary structure, muscle myosin is a hexameric protein that consists of 2 heavy chain subunits (MHC), 2 alkali light chain subunits (MLC) and 2 regulatory light chain subunits (MLC-2).

It localises to the cytoplasm. The protein resides in the myofibril. Muscle contraction. The sequence is that of Myosin-4 from Rattus norvegicus (Rat).